A 311-amino-acid polypeptide reads, in one-letter code: Endosome-associated-trafficking regulator 1 (311 aa).

Residues 167-278 are a coiled coil; sequence RGNAENGTKN…KSENERLRLG (112 aa).

This sequence belongs to the ENTR1 family.

It localises to the cytoplasm. It is found in the early endosome. The protein resides in the endosome. The protein localises to the recycling endosome. Its subcellular location is the midbody. It localises to the cytoskeleton. It is found in the microtubule organizing center. The protein resides in the centrosome. The protein localises to the cilium basal body. Functionally, endosome-associated protein that plays a role in membrane receptor sorting, cytokinesis and ciliogenesis. This is Endosome-associated-trafficking regulator 1 from Danio rerio (Zebrafish).